A 768-amino-acid chain; its full sequence is MESEKPKKTQEMKTDLKLLLECLKYHMGNPLSQKEVLITIHSVCKQNSDAGIYFREIGGLMFIINLAKSSEQSLVKEAALYTLGSIAEENVYCQQSLCTSELFQDLTGLLTNDDSNTNLKRMSVYVLLVLVSNNRNGQTLVREVGCIEVLSQMFRTVLSNYELNLSDNSVFQSYLLWSSVCSTLCVCVNNPQNDENQMLCCSLFPCVNEWLMNCMRPEVIRPICSFIGLTLANNTHAQNCFVSSGGLDVLCQVLVQLESDSHNTLSSAKLAVIVTKTMDACITDNSAAFTVVLSKYHIVSTLLALLLHESLDSREKFSIILAIGHCTEDCEKNQYELLKNNGLPLMIQALTEFKNEDLSKAATYVLHNCKKITGKLSLSLGQNSFGENEIELKDISEKETLREHWKAAKEILCRIKQFEKGGKEEKQQNRSGHYKDNTPSMKVNIQTNLKRLCADSTGGTRAEDKDINQSRELRSYKPSEIMSKACANENQLTTRKKNTNPVHPFCKEKGQSKIVHETTPSCAQNLDKEKTFDQKDSVSQSSDQVLKHLPHTVKNRKQVPETDPFTLCLDIIDREVGIQATDSCSRMLKYTCSGCIVARKLLNSRNFSKFLHSCAYQCVHHKVIMEAEDKYKNELRKTFICAKKILLTPCRRRQLCKESTASEELKIVHQKPDSKKLPGLEAQALNTSIPEAMERRSPVPGQSGLHKKRRIRKDFTKEEVNYLFHGVKTMGNHWNSILWSFPFQKGRRAVDLAHKYHRLIKGPSCAAL.

2 ARM repeats span residues 101-145 and 341-384; these read ELFQ…REVG and NGLP…GQNS. Residues 399-448 adopt a coiled-coil conformation; the sequence is ETLREHWKAAKEILCRIKQFEKGGKEEKQQNRSGHYKDNTPSMKVNIQTN. 2 stretches are compositionally biased toward basic and acidic residues: residues 422–436 and 461–475; these read GKEE…HYKD and RAED…ELRS. Disordered stretches follow at residues 422–441 and 454–475; these read GKEE…TPSM and ADST…ELRS. Positions 524 to 700 are interaction with TERF1; sequence QNLDKEKTFD…EAMERRSPVP (177 aa). Position 648 is a phosphothreonine (threonine 648). The Myb-like domain occupies 707-760; the sequence is KKRRIRKDFTKEEVNYLFHGVKTMGNHWNSILWSFPFQKGRRAVDLAHKYHRLI.

It belongs to the TERB1 family. As to quaternary structure, component of the MAJIN-TERB1-TERB2 complex, composed of MAJIN, TERB1 and TERB2. Interacts with TERF1, STAG3 and SUN1. Interacts (via Myb-like domain) with the cohesin complex; probably mediated via interaction with STAG3. Phosphorylated by CDK. Phosphorylation by CDK takes place in late prophase when the cap exchange is prominent. is important for the stabilization of telomere attachment but dispenable for the cap exchange. Expressed in testis and fetal oocytes.

It localises to the chromosome. It is found in the telomere. Its subcellular location is the nucleus inner membrane. Its function is as follows. Meiosis-specific telomere-associated protein involved in meiotic telomere attachment to the nucleus inner membrane, a crucial step for homologous pairing and synapsis. Component of the MAJIN-TERB1-TERB2 complex, which promotes telomere cap exchange by mediating attachment of telomeric DNA to the inner nuclear membrane and replacement of the protective cap of telomeric chromosomes: in early meiosis, the MAJIN-TERB1-TERB2 complex associates with telomeric DNA and the shelterin/telosome complex. During prophase, the complex matures and promotes release of the shelterin/telosome complex from telomeric DNA. In the MAJIN-TERB1-TERB2 complex, TERB1 probably mediates association with the shelterin/telosome complex via interaction with TERF1, promoting priming telomeric DNA attachment'. Promotes telomere association with the nuclear envelope and deposition of the SUN-KASH/LINC complex. Also recruits cohesin to telomeres to develop structural rigidity. In Mus musculus (Mouse), this protein is Telomere repeats-binding bouquet formation protein 1.